The following is a 571-amino-acid chain: Proline--tRNA ligase (571 aa).

This sequence belongs to the class-II aminoacyl-tRNA synthetase family. ProS type 1 subfamily. Homodimer.

Its subcellular location is the cytoplasm. It carries out the reaction tRNA(Pro) + L-proline + ATP = L-prolyl-tRNA(Pro) + AMP + diphosphate. Catalyzes the attachment of proline to tRNA(Pro) in a two-step reaction: proline is first activated by ATP to form Pro-AMP and then transferred to the acceptor end of tRNA(Pro). As ProRS can inadvertently accommodate and process non-cognate amino acids such as alanine and cysteine, to avoid such errors it has two additional distinct editing activities against alanine. One activity is designated as 'pretransfer' editing and involves the tRNA(Pro)-independent hydrolysis of activated Ala-AMP. The other activity is designated 'posttransfer' editing and involves deacylation of mischarged Ala-tRNA(Pro). The misacylated Cys-tRNA(Pro) is not edited by ProRS. This Aliivibrio fischeri (strain MJ11) (Vibrio fischeri) protein is Proline--tRNA ligase.